The primary structure comprises 534 residues: Cytochrome P450 monooxygenase AN1598 (534 aa).

N-linked (GlcNAc...) asparagine glycosylation occurs at Asn3. A helical membrane pass occupies residues 25–45 (LYLEILGVLSVVYLLQTLVAY). Asn95 is a glycosylation site (N-linked (GlcNAc...) asparagine). Position 464 (Cys464) interacts with heme. The N-linked (GlcNAc...) asparagine glycan is linked to Asn498.

The protein belongs to the cytochrome P450 family. Heme is required as a cofactor.

The protein localises to the membrane. It participates in secondary metabolite biosynthesis; terpenoid biosynthesis. Functionally, bifunctional terpene synthase; part of the gene cluster that mediates the biosynthesis of the diterpene ent-pimara-8(14),15-diene (PD). Within the cluster, the HMG-CoA reductase AN1593 functions in the mevalonate pathway, which produces isoprenoid precursors. The geranylgeranyl pyrophosphate (GGPP) synthase AN1592 is needed in the formation of GGPP, the precursor for diterpenes. Lastly, the pimaradiene synthase pbcA performs the 2 cyclization steps that convert GGPP to ent-pimara-8(14),15-diene. The putative roles of the remaining cluster enzymes in ent-pimara-8(14),15-diene biosynthesis is unclear. The cytochrome P450 monooxygenase AN1598, the glutathione S-transferase AN1595, the oxidoreductases AN1596 and AN1597 probably function as decorative enzymes. It is possible that in biological conditions the compound is oxidized to ent-pimara-8(14),15-dien-19-oic acid, which is a bioactive diterpene compound predominant in many plant extracts. This Emericella nidulans (strain FGSC A4 / ATCC 38163 / CBS 112.46 / NRRL 194 / M139) (Aspergillus nidulans) protein is Cytochrome P450 monooxygenase AN1598.